A 161-amino-acid polypeptide reads, in one-letter code: Kininogen-2 (161 aa).

The N-terminal stretch at Met1–Ala23 is a signal peptide. A disulfide bridge connects residues Cys150 and Cys156. Val160 is subject to Valine amide.

Belongs to the bradykinin-related peptide family. In terms of tissue distribution, expressed by the skin glands.

The protein localises to the secreted. Functionally, inhibits ACE with a Ki of 1.6 uM, and targets B2 bradykinin receptor (BDKRB2). Provokes contraction of smooth muscle preparation (ileum). In vivo, induces an early hyperalgesic effects in living rats after intraplantar injection. Inhibits the bradykinin-induced in vitro relaxation of rat arterial smooth muscle and constriction of intestinal smooth muscle. May target bradykinin receptors (BDKRB). This Bombina orientalis (Oriental fire-bellied toad) protein is Kininogen-2.